We begin with the raw amino-acid sequence, 355 residues long: Phosphatidylinositol:ceramide inositolphosphotransferase (355 aa).

Over 1–44 (MISYPFFSLSPPGLVPPPMAVPPVEMYSGSFWNRMRKPLPLRTQ) the chain is Cytoplasmic. Residues 45–65 (VIRFTVVFVIVSFILAVALQI) form a helical membrane-spanning segment. The Extracellular segment spans residues 66–89 (THERMPDPKVTKPLPDLGFELLTK). A helical membrane pass occupies residues 90-110 (ISFLSVVTDVLIAFLSSLSFF). Residues 111–165 (TLWKLYLLHRHCVGSGEPELPCNIPGVSRFFLSVWLCKENCRIELRNVHTIAWIR) are Cytoplasmic-facing. The helical transmembrane segment at 166 to 186 (FITSYALLLLFRSLVIVMTSM) threads the bilayer. At 187–205 (PTPVDKCQNPPKIENPVKN) the chain is on the extracellular side. Residues 206–226 (VILTVLTAGGGSIHCGDLMYS) form a helical membrane-spanning segment. At 227 to 251 (GHTVILTLHLMFHWIYGAMVHWSFR) the chain is on the cytoplasmic side. Catalysis depends on residues His-228, His-271, and Asp-275. The helical transmembrane segment at 252–272 (PVVTVVAIFGYYCIVASRSHY) threads the bilayer. Over 273–275 (TDD) the chain is Extracellular. Residues 276–296 (VLVAIYLTIATFIAVGHNADG) form a helical membrane-spanning segment. Topologically, residues 297–355 (APWQLQLFIRWLPCCGANSREVTEDSQPVMVAFKSEAVDELRERDDSAGLSCEVSTNEV) are cytoplasmic.

The protein belongs to the sphingomyelin synthase family.

It localises to the membrane. Functionally, bidirectional lipid inositolphosphotransferase capable of converting phosphatidylinositol (PI) and ceramide to inositol-phosphorylceramide (IPC) and diacylglycerol (DAG) and vice versa. Direction is dependent on the relative concentrations of DAG and ceramide as phosphoinositol acceptors. Does not function strictly as a SM synthase. Essential for viability of the pathogenic bloodstream stage of this human protozoan parasite and, consequently, can be considered as potential drug target. The chain is Phosphatidylinositol:ceramide inositolphosphotransferase from Trypanosoma brucei brucei (strain 927/4 GUTat10.1).